The chain runs to 485 residues: Glutamate--tRNA ligase (485 aa).

The 'HIGH' region motif lies at 11-21; the sequence is PSPTGYMHVGN. Cys-108, Cys-110, Cys-135, and Asp-137 together coordinate Zn(2+). A 'KMSKS' region motif is present at residues 252 to 256; that stretch reads KLSKR. Lys-255 is an ATP binding site.

It belongs to the class-I aminoacyl-tRNA synthetase family. Glutamate--tRNA ligase type 1 subfamily. Monomer. Requires Zn(2+) as cofactor.

It localises to the cytoplasm. It carries out the reaction tRNA(Glu) + L-glutamate + ATP = L-glutamyl-tRNA(Glu) + AMP + diphosphate. Its function is as follows. Catalyzes the attachment of glutamate to tRNA(Glu) in a two-step reaction: glutamate is first activated by ATP to form Glu-AMP and then transferred to the acceptor end of tRNA(Glu). This is Glutamate--tRNA ligase from Clostridium botulinum (strain Okra / Type B1).